The primary structure comprises 351 residues: Methionine import ATP-binding protein MetN (351 aa).

The region spanning 4 to 249 (VQLDHVSVTF…PKAELTQKFV (246 aa)) is the ABC transporter domain. 41-48 (GFSGAGKS) lines the ATP pocket.

It belongs to the ABC transporter superfamily. Methionine importer (TC 3.A.1.24) family. In terms of assembly, the complex is composed of two ATP-binding proteins (MetN), two transmembrane proteins (MetI) and a solute-binding protein (MetQ).

The protein localises to the cell membrane. It catalyses the reaction L-methionine(out) + ATP + H2O = L-methionine(in) + ADP + phosphate + H(+). The enzyme catalyses D-methionine(out) + ATP + H2O = D-methionine(in) + ADP + phosphate + H(+). Part of the ABC transporter complex MetNIQ involved in methionine import. Responsible for energy coupling to the transport system. The polypeptide is Methionine import ATP-binding protein MetN (Lactobacillus delbrueckii subsp. bulgaricus (strain ATCC BAA-365 / Lb-18)).